We begin with the raw amino-acid sequence, 630 residues long: tRNA uridine 5-carboxymethylaminomethyl modification enzyme MnmG (630 aa).

13 to 18 provides a ligand contact to FAD; it reads GGGHAG. 273–287 provides a ligand contact to NAD(+); that stretch reads GPRYCPSIEDKIHRF.

It belongs to the MnmG family. Homodimer. Heterotetramer of two MnmE and two MnmG subunits. FAD is required as a cofactor.

It is found in the cytoplasm. NAD-binding protein involved in the addition of a carboxymethylaminomethyl (cmnm) group at the wobble position (U34) of certain tRNAs, forming tRNA-cmnm(5)s(2)U34. The protein is tRNA uridine 5-carboxymethylaminomethyl modification enzyme MnmG of Pseudomonas putida (strain GB-1).